We begin with the raw amino-acid sequence, 472 residues long: Serralysin A (472 aa).

A propeptide spanning residues 1 to 17 (MEKNLSSRDDDALHSLS) is cleaved from the precursor. A Zn(2+)-binding site is contributed by His186. Glu187 is an active-site residue. His190 and Tyr221 together coordinate Zn(2+). Residues Arg258, Gly260, Thr262, Asp290, Gly292, Gly293, Thr332, Glu334, Gly339, Gly341, Asp343, Asn348, Ala350, Asn352, Gly356, Gly357, Ala358, Gly359, Asp361, Gly365, Gly366, Gly367, Gly368, Asp370, Gly374, Gly375, Gly377, Asp379, Asp388, Asp395, and Asp405 each coordinate Ca(2+). 2 Hemolysin-type calcium-binding repeats span residues 337-354 (IGGS…DNIL) and 355-372 (RGGA…ADRL).

It belongs to the peptidase M10B family. It depends on Ca(2+) as a cofactor. The cofactor is Zn(2+).

The protein resides in the secreted. It catalyses the reaction Preferential cleavage of bonds with hydrophobic residues in P1'.. This chain is Serralysin A (prtA), found in Dickeya chrysanthemi (Pectobacterium chrysanthemi).